Consider the following 474-residue polypeptide: uncharacterized protein (474 aa).

This is an uncharacterized protein from Magallana gigas (Pacific oyster).